We begin with the raw amino-acid sequence, 811 residues long: Glycerol-3-phosphate acyltransferase (811 aa).

The short motif at 309-314 (CHRSHM) is the HXXXXD motif element.

Belongs to the GPAT/DAPAT family.

It localises to the cell inner membrane. The enzyme catalyses sn-glycerol 3-phosphate + an acyl-CoA = a 1-acyl-sn-glycero-3-phosphate + CoA. It participates in phospholipid metabolism; CDP-diacylglycerol biosynthesis; CDP-diacylglycerol from sn-glycerol 3-phosphate: step 1/3. This is Glycerol-3-phosphate acyltransferase from Colwellia psychrerythraea (strain 34H / ATCC BAA-681) (Vibrio psychroerythus).